A 154-amino-acid chain; its full sequence is MGHRNTVLTILLTISIAIMVLIATVFVSNNKTETLLQTHTQTQTLITTGRVSRFLAQNAKNGRNLNAADHCNKEEEICKSQGMYNSTMACCSNKCVDLAYDNDNCGACKNQCKFTQTCCRGECVYLAYDKRHCGECNHSCLVGEFCVYGLCNYA.

Residues 1–23 (MGHRNTVLTILLTISIAIMVLIA) form the signal peptide.

Belongs to the STIG1 family.

The protein is Stigma-specific STIG1-like protein 3 of Arabidopsis thaliana (Mouse-ear cress).